The sequence spans 239 residues: O-antigen export system ATP-binding protein RfbE (239 aa).

Positions valine 28 to leucine 239 constitute an ABC transporter domain. Glycine 66–serine 73 contributes to the ATP binding site.

This sequence belongs to the ABC transporter superfamily.

It localises to the cell inner membrane. In terms of biological role, may form an ATP-driven O-antigen export apparatus, in association with RfbD. The polypeptide is O-antigen export system ATP-binding protein RfbE (rfbE) (Yersinia enterocolitica).